A 1199-amino-acid chain; its full sequence is Major DNA-binding protein (1199 aa).

A disordered region spans residues 289 to 314 (SGTTTARGARRNDVNSTSKPSPSGGF). A zinc finger lies at 497–510 (CSLCEKHTRPVCAH). 2 consecutive short sequence motifs (required for filament formation) follow at residues 841-842 (FW) and 1146-1148 (FNF). The segment at 1172-1199 (LKRPPEDDELFDLSGIPIKHGNITMEMI) is required for nuclear localization.

The protein belongs to the herpesviridae major DNA-binding protein family. Homooligomers. Forms double-helical filaments necessary for the formation of replication compartments within the host nucleus. Interacts with the origin-binding protein. Interacts with the helicase primase complex; this interaction stimulates primer synthesis activity of the helicase-primase complex. Interacts with the DNA polymerase. Interacts with the alkaline exonuclease; this interaction increases its nuclease processivity.

Its subcellular location is the host nucleus. Its function is as follows. Plays several crucial roles in viral infection. Participates in the opening of the viral DNA origin to initiate replication by interacting with the origin-binding protein. May disrupt loops, hairpins and other secondary structures present on ssDNA to reduce and eliminate pausing of viral DNA polymerase at specific sites during elongation. Promotes viral DNA recombination by performing strand-transfer, characterized by the ability to transfer a DNA strand from a linear duplex to a complementary single-stranded DNA circle. Can also catalyze the renaturation of complementary single strands. Additionally, reorganizes the host cell nucleus, leading to the formation of prereplicative sites and replication compartments. This process is driven by the protein which can form double-helical filaments in the absence of DNA. In Varicella-zoster virus (strain Oka vaccine) (HHV-3), this protein is Major DNA-binding protein.